The primary structure comprises 370 residues: Nematocyst expressed protein 4 (370 aa).

An N-terminal signal peptide occupies residues 1–19 (MAWTLVLLVLLGTSSCLDA). The disordered stretch occupies residues 34–55 (SGSGSGEEGSSGSGSAPEPVRD). Residues 36–45 (SGSGEEGSSG) show a composition bias toward gly residues. 3 ShKT domains span residues 70–102 (CLDKGENCTGDPEQCQENWQEMVVQCPFSCRFC), 113–149 (CTDARGAACKDWADNRNDCLRFPQFMSTECTKSCKLC), and 155–190 (GKKFDKDVRCIEWAKNGYCNEGELYKEKCPHNCEVH). Disulfide bonds link cysteine 70–cysteine 102, cysteine 77–cysteine 95, cysteine 84–cysteine 99, cysteine 113–cysteine 149, cysteine 121–cysteine 142, cysteine 131–cysteine 146, cysteine 164–cysteine 183, and cysteine 173–cysteine 187. A compositionally biased stretch (pro residues) spans 306–340 (PYPPPPPPYPEQVPPPPPPPPPPPPPPPYPYPYPY). A disordered region spans residues 306-370 (PYPPPPPPYP…HHKENHSKKS (65 aa)). Basic residues predominate over residues 349-370 (HKSKKHAKHHEKHHKENHSKKS).

Belongs to the NEP3 family. In terms of tissue distribution, nematocytes. In late planulae, transcripts are found throughout the ectoderm in nematocytes, with high concentration of expressing cells in the oral pole. In primary polyps, is expressed in nematocytes in the body wall and physa ectoderm and in the upper and lower pharynx.

It is found in the nematocyst. It localises to the secreted. The chain is Nematocyst expressed protein 4 from Nematostella vectensis (Starlet sea anemone).